We begin with the raw amino-acid sequence, 299 residues long: Glycine--tRNA ligase alpha subunit (299 aa).

Belongs to the class-II aminoacyl-tRNA synthetase family. As to quaternary structure, tetramer of two alpha and two beta subunits.

The protein localises to the cytoplasm. It catalyses the reaction tRNA(Gly) + glycine + ATP = glycyl-tRNA(Gly) + AMP + diphosphate. In Pediococcus pentosaceus (strain ATCC 25745 / CCUG 21536 / LMG 10740 / 183-1w), this protein is Glycine--tRNA ligase alpha subunit.